Consider the following 203-residue polypeptide: Protein-methionine-sulfoxide reductase heme-binding subunit MsrQ (203 aa).

6 helical membrane-spanning segments follow: residues 10-30 (IFVL…MGLL), 37-57 (IMMD…LSMT), 75-95 (LGLW…VFIL), 110-130 (PYII…VTSN), 147-167 (LVYV…RSDL), and 169-189 (EWAI…PPVW).

Belongs to the MsrQ family. In terms of assembly, heterodimer of a catalytic subunit (MsrP) and a heme-binding subunit (MsrQ). FMN is required as a cofactor. The cofactor is heme b.

It localises to the cell inner membrane. Functionally, part of the MsrPQ system that repairs oxidized periplasmic proteins containing methionine sulfoxide residues (Met-O), using respiratory chain electrons. Thus protects these proteins from oxidative-stress damage caused by reactive species of oxygen and chlorine generated by the host defense mechanisms. MsrPQ is essential for the maintenance of envelope integrity under bleach stress, rescuing a wide series of structurally unrelated periplasmic proteins from methionine oxidation. MsrQ provides electrons for reduction to the reductase catalytic subunit MsrP, using the quinone pool of the respiratory chain. In Pseudomonas entomophila (strain L48), this protein is Protein-methionine-sulfoxide reductase heme-binding subunit MsrQ.